The primary structure comprises 273 residues: Short-chain dehydrogenase fogB (273 aa).

Residues isoleucine 16, aspartate 66, arginine 128, tyrosine 174, lysine 178, valine 207, and threonine 209 each contribute to the NADP(+) site. The Proton donor role is filled by tyrosine 174. Lysine 178 (lowers pKa of active site Tyr) is an active-site residue.

This sequence belongs to the short-chain dehydrogenases/reductases (SDR) family.

Short-chain dehydrogenase; part of the gene cluster that mediates the biosynthesis of flavoglaucin and congeners (including aspergin, dihydroauroglaucin and auroglaucin), prenylated salicylaldehyde derivatives carrying a saturated or an unsaturated C-7 side chain. The PKS fogA releases the carboxylic acid (8E,10E,12E)-3,5,7-trihydroxytetradeca-8,10,12-trienoic acid as its product, as well as derivatives with one and two double bonds. FogA is indeed able to reduce the initial triketide, thus being at least partially responsible for the differently saturated heptyl side chains of flavoglaucin congeners. The oxidoreductases fogB, fogC and fogD modify the nascent polyketide in fogA-bound form and, together, fogA, fogB, fogC and fogD are necessary for the formation of the aromatic core and the cyclized PKS products are released as salicyl alcohols. In particular, fogB is responsible for oxidation of a hydroxyl group or reduction of remaining double bond(s) at the C-7 residue whereas fogD is probably involved in the reductive release of the modified PKS products. The cytochrome P450 monooxygenase fogE is then responsible for the hydroxylation at C-3 of the benzene ring. The fogE products are substrates of the prenyltransferase fogH and the prenylated benzyl alcohols are subsequently oxidized by the fogF to produce the final aryl aldehydes flavoglaucin and congeners. The short-chain dehydrogenase fogG does not seem to be involved in the biosynthesis of the prenylated salicylaldehyde derivatives. The protein is Short-chain dehydrogenase fogB of Aspergillus ruber (strain CBS 135680).